A 727-amino-acid polypeptide reads, in one-letter code: NHL repeat-containing protein 2 (727 aa).

Residues Arg-43–Gln-198 form the Thioredoxin domain. NHL repeat units follow at residues Lys-207–Asn-249, Asn-260–Glu-302, Ile-330–Leu-364, Phe-404–Ile-434, Ala-456–Lys-500, and Ala-513–Glu-557.

Monomer.

The protein resides in the cytoplasm. The protein localises to the cytosol. Its function is as follows. Required for normal embryonic development. This chain is NHL repeat-containing protein 2 (NHLRC2), found in Gallus gallus (Chicken).